Reading from the N-terminus, the 110-residue chain is Protein C-ets-2 (110 aa).

Positions 1–84 (SGPIQLWQFL…AGKRYVYRFV (84 aa)) form a DNA-binding region, ETS.

This sequence belongs to the ETS family.

It localises to the nucleus. Probable transcription factor. The sequence is that of Protein C-ets-2 (ETS-2) from Lytechinus variegatus (Green sea urchin).